The following is a 155-amino-acid chain: Ribosome maturation factor RimP (155 aa).

This sequence belongs to the RimP family.

It is found in the cytoplasm. Functionally, required for maturation of 30S ribosomal subunits. The protein is Ribosome maturation factor RimP of Maridesulfovibrio salexigens (strain ATCC 14822 / DSM 2638 / NCIMB 8403 / VKM B-1763) (Desulfovibrio salexigens).